An 89-amino-acid chain; its full sequence is Small ribosomal subunit protein uS15 (89 aa).

This sequence belongs to the universal ribosomal protein uS15 family. Part of the 30S ribosomal subunit. Forms a bridge to the 50S subunit in the 70S ribosome, contacting the 23S rRNA.

In terms of biological role, one of the primary rRNA binding proteins, it binds directly to 16S rRNA where it helps nucleate assembly of the platform of the 30S subunit by binding and bridging several RNA helices of the 16S rRNA. Forms an intersubunit bridge (bridge B4) with the 23S rRNA of the 50S subunit in the ribosome. This is Small ribosomal subunit protein uS15 from Prochlorococcus marinus (strain MIT 9312).